The sequence spans 65 residues: Translational regulator CsrA (65 aa).

This sequence belongs to the CsrA/RsmA family. As to quaternary structure, homodimer; the beta-strands of each monomer intercalate to form a hydrophobic core, while the alpha-helices form wings that extend away from the core.

The protein resides in the cytoplasm. A key translational regulator that binds mRNA to regulate translation initiation and/or mRNA stability. Mediates global changes in gene expression, shifting from rapid growth to stress survival by linking envelope stress, the stringent response and the catabolite repression systems. Usually binds in the 5'-UTR; binding at or near the Shine-Dalgarno sequence prevents ribosome-binding, repressing translation, binding elsewhere in the 5'-UTR can activate translation and/or stabilize the mRNA. Its function is antagonized by small RNA(s). The protein is Translational regulator CsrA of Pseudomonas putida (strain ATCC 47054 / DSM 6125 / CFBP 8728 / NCIMB 11950 / KT2440).